The sequence spans 550 residues: Solute carrier family 22 member 6 (550 aa).

Residues 1-9 (MAFNDLLQQ) lie on the Cytoplasmic side of the membrane. A helical membrane pass occupies residues 10–30 (VGGVGRFQQIQVTLVVLPLLL). The Extracellular portion of the chain corresponds to 31-135 (MASHNTLQNF…LVCSHRALRQ (105 aa)). Residues N39, N92, and N113 are each glycosylated (N-linked (GlcNAc...) asparagine). A helical transmembrane segment spans residues 136 to 156 (LAQSLYMVGVLLGAMVFGYLA). Residues 157–164 (DRLGRRKV) lie on the Cytoplasmic side of the membrane. A helical membrane pass occupies residues 165–187 (LILNYLQTAVSGTCTAFAPNFSI). Residues 188 to 195 (YCAFRLLS) are Extracellular-facing. The chain crosses the membrane as a helical span at residues 196 to 216 (GMSLAGISLNCMTLNVEWMPI). Residues 217-224 (HTRACVGT) lie on the Cytoplasmic side of the membrane. A helical membrane pass occupies residues 225–245 (LIGYVYSLGQFLLAGVAYAVP). Residues 246-248 (HWR) are Extracellular-facing. A helical membrane pass occupies residues 249–269 (HLQLLVSAPFFAFFIYSWFFI). Residues 270–337 (ESARWHSSSG…ELLRCPTLRH (68 aa)) lie on the Cytoplasmic side of the membrane. A helical transmembrane segment spans residues 338-358 (LFLCLSMLWFATSFAYYGLVM). The Extracellular portion of the chain corresponds to 359–368 (DLQGFGVSIY). Residues 369–389 (LIQVIFGAVDLPAKLVGFLVI) traverse the membrane as a helical segment. The Cytoplasmic portion of the chain corresponds to 390–395 (NSLGRR). The chain crosses the membrane as a helical span at residues 396–416 (PAQMAALLLAGICILLNGVIP). The Extracellular portion of the chain corresponds to 417–420 (QDQS). A helical transmembrane segment spans residues 421-444 (IVRTSLAVPGKGCLAASFNCIFLY). Residues 445-455 (TGELYPTMIRQ) lie on the Cytoplasmic side of the membrane. A helical transmembrane segment spans residues 456–475 (TGMGMGSTMARVGSIVSPLV). At 476–484 (SMTAELYPS) the chain is on the extracellular side. A helical transmembrane segment spans residues 485 to 505 (MPLFIYGAVPVAASAVTVLLP). Topologically, residues 506 to 550 (ETLGQPLPDTVQDLESRKGKQTRQQQEHQKYMVPLQASAQEKNGL) are cytoplasmic. The disordered stretch occupies residues 514–550 (DTVQDLESRKGKQTRQQQEHQKYMVPLQASAQEKNGL).

The protein belongs to the major facilitator (TC 2.A.1) superfamily. Organic cation transporter (TC 2.A.1.19) family. In terms of processing, glycosylated. Glycosylation is necessary for proper targeting of the transporter to the plasma membrane.

Its subcellular location is the cell membrane. It carries out the reaction prostaglandin F2alpha(out) = prostaglandin F2alpha(in). The enzyme catalyses prostaglandin E2(out) = prostaglandin E2(in). Involved in the renal elimination of endogenous and exogenous organic anions. Functions as organic anion exchanger when the uptake of one molecule of organic anion is coupled with an efflux of one molecule of endogenous dicarboxylic acid (glutarate, ketoglutarate, etc). Mediates the transport of prostaglandin E2 (PGE2) and prostaglandin F2-alpha (PGF2-alpha) and may be involved in their renal excretion. Also mediates the sodium-independent uptake of p-aminohippurate (PAH), 2,3-dimercapto-1-propanesulfonic acid (DMPS), cidofovir, adefovir, 9-(2-phosphonylmethoxyethyl) guanine (PMEG), 9-(2-phosphonylmethoxyethyl) diaminopurine (PMEDAP), ochratoxin (OTA), acyclovir (ACV), 3'-azido-3-'deoxythymidine (AZT), cimetidine (CMD), 2,4-dichloro-phenoxyacetate (2,4-D), hippurate (HA), indoleacetate (IA), indoxyl sulfate (IS) and 3-carboxy-4-methyl-5-propyl-2-furanpropionate (CMPF) and edaravone sulfate. PAH uptake is inhibited by p-chloromercuribenzenesulphonate (PCMBS), diethyl pyrocarbonate (DEPC), indomethacin, sulindac, diclofenac, carprofen, okadaic acid, benzothiazolylcysteine (BTC), S-chlorotrifluoroethylcysteine (CTFC), cysteine S-conjugates S-dichlorovinylcysteine (DCVC), furosemide, steviol, phorbol 12-myristate 13-acetate (PMA), calcium ionophore A23187, benzylpenicillin, bumetamide, losartan, probenecid, phenol red, urate, glutarate and alpha-ketoglutarate. The polypeptide is Solute carrier family 22 member 6 (SLC22A6) (Pongo abelii (Sumatran orangutan)).